Consider the following 171-residue polypeptide: ATP synthase subunit b (171 aa).

The chain crosses the membrane as a helical span at residues Val2–Leu22.

This sequence belongs to the ATPase B chain family. F-type ATPases have 2 components, F(1) - the catalytic core - and F(0) - the membrane proton channel. F(1) has five subunits: alpha(3), beta(3), gamma(1), delta(1), epsilon(1). F(0) has three main subunits: a(1), b(2) and c(10-14). The alpha and beta chains form an alternating ring which encloses part of the gamma chain. F(1) is attached to F(0) by a central stalk formed by the gamma and epsilon chains, while a peripheral stalk is formed by the delta and b chains.

Its subcellular location is the cell inner membrane. Its function is as follows. F(1)F(0) ATP synthase produces ATP from ADP in the presence of a proton or sodium gradient. F-type ATPases consist of two structural domains, F(1) containing the extramembraneous catalytic core and F(0) containing the membrane proton channel, linked together by a central stalk and a peripheral stalk. During catalysis, ATP synthesis in the catalytic domain of F(1) is coupled via a rotary mechanism of the central stalk subunits to proton translocation. In terms of biological role, component of the F(0) channel, it forms part of the peripheral stalk, linking F(1) to F(0). This chain is ATP synthase subunit b, found in Helicobacter acinonychis (strain Sheeba).